A 32-amino-acid polypeptide reads, in one-letter code: Cytochrome b6-f complex subunit 6 (32 aa).

A helical transmembrane segment spans residues 6-26; that stretch reads VFYIVFIALFFGIAVGIIFAI.

This sequence belongs to the PetL family. In terms of assembly, the 4 large subunits of the cytochrome b6-f complex are cytochrome b6, subunit IV (17 kDa polypeptide, PetD), cytochrome f and the Rieske protein, while the 4 small subunits are PetG, PetL, PetM and PetN. The complex functions as a dimer.

The protein localises to the cellular thylakoid membrane. Its function is as follows. Component of the cytochrome b6-f complex, which mediates electron transfer between photosystem II (PSII) and photosystem I (PSI), cyclic electron flow around PSI, and state transitions. PetL is important for photoautotrophic growth as well as for electron transfer efficiency and stability of the cytochrome b6-f complex. This chain is Cytochrome b6-f complex subunit 6, found in Mastigocladus laminosus (Fischerella sp.).